The sequence spans 154 residues: Large ribosomal subunit protein uL13 (154 aa).

This sequence belongs to the universal ribosomal protein uL13 family. As to quaternary structure, part of the 50S ribosomal subunit.

Its function is as follows. This protein is one of the early assembly proteins of the 50S ribosomal subunit, although it is not seen to bind rRNA by itself. It is important during the early stages of 50S assembly. This chain is Large ribosomal subunit protein uL13, found in Borrelia garinii subsp. bavariensis (strain ATCC BAA-2496 / DSM 23469 / PBi) (Borreliella bavariensis).